A 291-amino-acid chain; its full sequence is Hydroxysteroid 11-beta-dehydrogenase 1-like protein B (291 aa).

An N-terminal signal peptide occupies residues 1–17; sequence MAGVILLLLSLCVGYIA. NADP(+)-binding positions include 40 to 66, 91 to 92, and 118 to 120; these read GSSTGLGEQIAYEFARMGAHIMITARR, DM, and NHI. Residue S170 coordinates substrate. The active-site Proton acceptor is Y183. NADP(+) is bound by residues 183–187 and 216–222; these read YCASK and GYIDTEN.

Belongs to the short-chain dehydrogenases/reductases (SDR) family.

It localises to the secreted. It catalyses the reaction cortisone + NADPH + H(+) = cortisol + NADP(+). In terms of biological role, unidirectional NADP(+)-dependent cortisol dehydrogenase (in vitro). The chain is Hydroxysteroid 11-beta-dehydrogenase 1-like protein B (hsd11b1l-b) from Xenopus laevis (African clawed frog).